Consider the following 522-residue polypeptide: Serine/threonine-protein kinase pak-2 (522 aa).

The 14-residue stretch at 16–29 (ISTPSNFEHRIHAG) folds into the CRIB domain. Positions 183-204 (TTTPQLQPKSPSTPQAMRQQPK) are enriched in polar residues. The disordered stretch occupies residues 183–208 (TTTPQLQPKSPSTPQAMRQQPKCTEG). A Protein kinase domain is found at 231–482 (LTDYKQIGEG…AKDLLRHPFF (252 aa)). ATP-binding positions include 237-245 (IGEGSTGVV) and lysine 260. Residue aspartate 350 is the Proton acceptor of the active site.

The protein belongs to the protein kinase superfamily. STE Ser/Thr protein kinase family. STE20 subfamily. The cofactor is Mg(2+). Requires Mn(2+) as cofactor. In terms of tissue distribution, expressed in pharynx, vulva and spermatheca. Unlike other p21-activated kinases, expression is not detected in neurons.

The enzyme catalyses L-seryl-[protein] + ATP = O-phospho-L-seryl-[protein] + ADP + H(+). It carries out the reaction L-threonyl-[protein] + ATP = O-phospho-L-threonyl-[protein] + ADP + H(+). Serine/threonine-protein kinase which plays a redundant role with pak-1 in embryogenesis but, in contrast to pak-1, is not involved in commissural axon guidance of ventral cord motoneurons or in distal tip cell (DTC) migration. This Caenorhabditis elegans protein is Serine/threonine-protein kinase pak-2.